Here is a 1262-residue protein sequence, read N- to C-terminus: Cytoplasmic FMR1-interacting protein homolog (1262 aa).

A disordered region spans residues 519–550; it reads LNRMTDVKGKKKSSAPKGDSANSSSSDIRIPR.

Belongs to the CYFIP family. Interacts with gex-3.

The protein localises to the cytoplasm. In terms of biological role, required for initial steps of body morphogenesis. May play a role in egg laying and yolk protein clatherin-mediated endocytosis by oocytes during oogenesis. Plays a role in the formation of muscle connections, also called muscle arm extensions, between the body wall and the motor axons in the dorsal and ventral cord. This Caenorhabditis elegans protein is Cytoplasmic FMR1-interacting protein homolog.